Consider the following 125-residue polypeptide: Large ribosomal subunit protein bL12 (125 aa).

It belongs to the bacterial ribosomal protein bL12 family. In terms of assembly, homodimer. Part of the ribosomal stalk of the 50S ribosomal subunit. Forms a multimeric L10(L12)X complex, where L10 forms an elongated spine to which 2 to 4 L12 dimers bind in a sequential fashion. Binds GTP-bound translation factors.

Its function is as follows. Forms part of the ribosomal stalk which helps the ribosome interact with GTP-bound translation factors. Is thus essential for accurate translation. This is Large ribosomal subunit protein bL12 from Afipia carboxidovorans (strain ATCC 49405 / DSM 1227 / KCTC 32145 / OM5) (Oligotropha carboxidovorans).